We begin with the raw amino-acid sequence, 288 residues long: ATP synthase subunit a (288 aa).

6 consecutive transmembrane segments (helical) span residues 47–67, 104–124, 157–177, 199–219, 237–257, and 258–278; these read LDSMLWSIGLGIVFCAIFWMV, LIAPLALTIFVWIFLMNLMDL, DPNITLGMSFSVFILILFYSI, PIVQIILIPINFILEFVTLIA, LIFILIALMPFWIQWALSVPW, and AIFHILIITLQAFVFMMLTIV.

It belongs to the ATPase A chain family. As to quaternary structure, F-type ATPases have 2 components, CF(1) - the catalytic core - and CF(0) - the membrane proton channel. CF(1) has five subunits: alpha(3), beta(3), gamma(1), delta(1), epsilon(1). CF(0) has three main subunits: a(1), b(2) and c(9-12). The alpha and beta chains form an alternating ring which encloses part of the gamma chain. CF(1) is attached to CF(0) by a central stalk formed by the gamma and epsilon chains, while a peripheral stalk is formed by the delta and b chains.

It localises to the cell inner membrane. Key component of the proton channel; it plays a direct role in the translocation of protons across the membrane. This is ATP synthase subunit a from Psychrobacter arcticus (strain DSM 17307 / VKM B-2377 / 273-4).